The chain runs to 247 residues: 3-deoxy-manno-octulosonate cytidylyltransferase (247 aa).

The protein belongs to the KdsB family.

It localises to the cytoplasm. The catalysed reaction is 3-deoxy-alpha-D-manno-oct-2-ulosonate + CTP = CMP-3-deoxy-beta-D-manno-octulosonate + diphosphate. Its pathway is nucleotide-sugar biosynthesis; CMP-3-deoxy-D-manno-octulosonate biosynthesis; CMP-3-deoxy-D-manno-octulosonate from 3-deoxy-D-manno-octulosonate and CTP: step 1/1. It functions in the pathway bacterial outer membrane biogenesis; lipopolysaccharide biosynthesis. Its function is as follows. Activates KDO (a required 8-carbon sugar) for incorporation into bacterial lipopolysaccharide in Gram-negative bacteria. The polypeptide is 3-deoxy-manno-octulosonate cytidylyltransferase (Pelodictyon phaeoclathratiforme (strain DSM 5477 / BU-1)).